The primary structure comprises 139 residues: Putative nickel-responsive regulator (139 aa).

The Ni(2+) site is built by His79, His90, His92, and Cys98.

It belongs to the transcriptional regulatory CopG/NikR family. Ni(2+) serves as cofactor.

Transcriptional regulator. This chain is Putative nickel-responsive regulator, found in Anaeromyxobacter dehalogenans (strain 2CP-1 / ATCC BAA-258).